Consider the following 123-residue polypeptide: uncharacterized protein (123 aa).

The disordered stretch occupies residues F17–S74. The residue at position 30 (T30) is a Phosphothreonine. Residues K32–P43 are compositionally biased toward low complexity. Positions K44–E54 are enriched in basic and acidic residues. S62 carries the post-translational modification Phosphoserine.

This is an uncharacterized protein from Homo sapiens (Human).